Consider the following 217-residue polypeptide: Rhicadhesin receptor (217 aa).

Residues 1-20 (MKLIAVLLLVVLATATTATA) form the signal peptide. The cysteines at positions 30 and 45 are disulfide-linked. Residues Asn-50 and Asn-68 are each glycosylated (N-linked (GlcNAc...) asparagine). The region spanning 58-207 (SNLLVKQGAT…AFQIGTKEVQ (150 aa)) is the Cupin type-1 domain. Residues His-107, His-109, Glu-114, and His-153 each coordinate Mn(2+).

Belongs to the germin family. In terms of processing, glycosylated.

It localises to the secreted. It is found in the extracellular space. The protein localises to the apoplast. Its subcellular location is the cell wall. In terms of biological role, putative receptor for bacterial rhicadhesin, an attachment protein of rhizobiaceae. In Pisum sativum (Garden pea), this protein is Rhicadhesin receptor (GER1).